The primary structure comprises 176 residues: Urease accessory protein UreE (176 aa).

The interval 147–176 (AGAYQQGGGHSHGHAHSHSHEKPHSHTHNH) is disordered.

Belongs to the UreE family.

The protein localises to the cytoplasm. Functionally, involved in urease metallocenter assembly. Binds nickel. Probably functions as a nickel donor during metallocenter assembly. This Alcanivorax borkumensis (strain ATCC 700651 / DSM 11573 / NCIMB 13689 / SK2) protein is Urease accessory protein UreE.